A 23-amino-acid polypeptide reads, in one-letter code: Defensin D4 (23 aa).

It belongs to the DEFL family. Group IV subfamily. In terms of tissue distribution, distributed in the epidermal cell layer of leaves and in the subepidermal layer region of stems. Not in roots.

It is found in the secreted. The protein resides in the cell wall. In terms of biological role, antimicrobial peptide. Active against Fusarium spp., Gram-positive and Gram-negative bacterial pathogens. This chain is Defensin D4, found in Spinacia oleracea (Spinach).